Here is a 197-residue protein sequence, read N- to C-terminus: DNA helicase/primase complex protein (197 aa).

The protein belongs to the herpesviridae UL52 family.

Its function is as follows. Involved in DNA replication. The chain is DNA helicase/primase complex protein (7) from Equus caballus (Horse).